The following is a 116-amino-acid chain: Large ribosomal subunit protein uL22c (116 aa).

The protein belongs to the universal ribosomal protein uL22 family. As to quaternary structure, part of the 50S ribosomal subunit.

It is found in the plastid. It localises to the chloroplast. Functionally, this protein binds specifically to 23S rRNA. The globular domain of the protein is located near the polypeptide exit tunnel on the outside of the subunit, while an extended beta-hairpin is found that lines the wall of the exit tunnel in the center of the 70S ribosome. The sequence is that of Large ribosomal subunit protein uL22c (rpl22) from Euglena gracilis.